The sequence spans 305 residues: Aspartate carbamoyltransferase catalytic subunit (305 aa).

Arginine 60 and threonine 61 together coordinate carbamoyl phosphate. Lysine 88 is an L-aspartate binding site. The carbamoyl phosphate site is built by arginine 110, histidine 138, and glutamine 141. L-aspartate is bound by residues arginine 171 and arginine 222. Carbamoyl phosphate-binding residues include alanine 263 and proline 264.

This sequence belongs to the aspartate/ornithine carbamoyltransferase superfamily. ATCase family. As to quaternary structure, heterododecamer (2C3:3R2) of six catalytic PyrB chains organized as two trimers (C3), and six regulatory PyrI chains organized as three dimers (R2).

The enzyme catalyses carbamoyl phosphate + L-aspartate = N-carbamoyl-L-aspartate + phosphate + H(+). The protein operates within pyrimidine metabolism; UMP biosynthesis via de novo pathway; (S)-dihydroorotate from bicarbonate: step 2/3. In terms of biological role, catalyzes the condensation of carbamoyl phosphate and aspartate to form carbamoyl aspartate and inorganic phosphate, the committed step in the de novo pyrimidine nucleotide biosynthesis pathway. The polypeptide is Aspartate carbamoyltransferase catalytic subunit (Halalkalibacterium halodurans (strain ATCC BAA-125 / DSM 18197 / FERM 7344 / JCM 9153 / C-125) (Bacillus halodurans)).